Consider the following 275-residue polypeptide: NH(3)-dependent NAD(+) synthetase (275 aa).

Position 50 to 57 (50 to 57 (GISGGVDS)) interacts with ATP. Residue aspartate 56 coordinates Mg(2+). Residue arginine 147 participates in deamido-NAD(+) binding. Threonine 167 serves as a coordination point for ATP. Glutamate 172 is a binding site for Mg(2+). Residues lysine 180 and aspartate 187 each contribute to the deamido-NAD(+) site. 2 residues coordinate ATP: lysine 196 and threonine 218. Residue 267–268 (HK) participates in deamido-NAD(+) binding.

This sequence belongs to the NAD synthetase family. In terms of assembly, homodimer.

It carries out the reaction deamido-NAD(+) + NH4(+) + ATP = AMP + diphosphate + NAD(+) + H(+). The protein operates within cofactor biosynthesis; NAD(+) biosynthesis; NAD(+) from deamido-NAD(+) (ammonia route): step 1/1. Functionally, catalyzes the ATP-dependent amidation of deamido-NAD to form NAD. Uses ammonia as a nitrogen source. This Pseudomonas putida (strain ATCC 700007 / DSM 6899 / JCM 31910 / BCRC 17059 / LMG 24140 / F1) protein is NH(3)-dependent NAD(+) synthetase.